Here is a 371-residue protein sequence, read N- to C-terminus: Ribosomal RNA small subunit methyltransferase H (371 aa).

Residues 43-45 (GGH), D62, L96, D110, and Q117 contribute to the S-adenosyl-L-methionine site. The tract at residues 315–371 (AAERLDPTQQQRQRTDRERYRRQVRAMHQPGTGSAVRRPVSGDDGTGTDEEGEGHDD) is disordered. The span at 360-371 (TGTDEEGEGHDD) shows a compositional bias: acidic residues.

Belongs to the methyltransferase superfamily. RsmH family.

Its subcellular location is the cytoplasm. It carries out the reaction cytidine(1402) in 16S rRNA + S-adenosyl-L-methionine = N(4)-methylcytidine(1402) in 16S rRNA + S-adenosyl-L-homocysteine + H(+). In terms of biological role, specifically methylates the N4 position of cytidine in position 1402 (C1402) of 16S rRNA. The polypeptide is Ribosomal RNA small subunit methyltransferase H (Salinispora tropica (strain ATCC BAA-916 / DSM 44818 / JCM 13857 / NBRC 105044 / CNB-440)).